Consider the following 199-residue polypeptide: Shikimate kinase (199 aa).

32–37 (GSGKTS) lines the ATP pocket. Threonine 36 serves as a coordination point for Mg(2+). 3 residues coordinate substrate: aspartate 54, arginine 78, and glycine 100. An ATP-binding site is contributed by arginine 138. Residue arginine 157 coordinates substrate.

It belongs to the shikimate kinase family. In terms of assembly, monomer. It depends on Mg(2+) as a cofactor.

It localises to the cytoplasm. It carries out the reaction shikimate + ATP = 3-phosphoshikimate + ADP + H(+). It participates in metabolic intermediate biosynthesis; chorismate biosynthesis; chorismate from D-erythrose 4-phosphate and phosphoenolpyruvate: step 5/7. Its function is as follows. Catalyzes the specific phosphorylation of the 3-hydroxyl group of shikimic acid using ATP as a cosubstrate. This is Shikimate kinase from Synechococcus sp. (strain CC9605).